We begin with the raw amino-acid sequence, 273 residues long: Dermonecrotic toxin LhSicTox-alphaIA2avii (273 aa).

His5 is a catalytic residue. Mg(2+)-binding residues include Glu25 and Asp27. His41 acts as the Nucleophile in catalysis. 2 disulfides stabilise this stretch: Cys45–Cys51 and Cys47–Cys190. Mg(2+) is bound at residue Asp85.

This sequence belongs to the arthropod phospholipase D family. Class II subfamily. Mg(2+) serves as cofactor. As to expression, expressed by the venom gland.

The protein resides in the secreted. It carries out the reaction an N-(acyl)-sphingosylphosphocholine = an N-(acyl)-sphingosyl-1,3-cyclic phosphate + choline. It catalyses the reaction an N-(acyl)-sphingosylphosphoethanolamine = an N-(acyl)-sphingosyl-1,3-cyclic phosphate + ethanolamine. The enzyme catalyses a 1-acyl-sn-glycero-3-phosphocholine = a 1-acyl-sn-glycero-2,3-cyclic phosphate + choline. The catalysed reaction is a 1-acyl-sn-glycero-3-phosphoethanolamine = a 1-acyl-sn-glycero-2,3-cyclic phosphate + ethanolamine. Functionally, dermonecrotic toxins cleave the phosphodiester linkage between the phosphate and headgroup of certain phospholipids (sphingolipid and lysolipid substrates), forming an alcohol (often choline) and a cyclic phosphate. This toxin acts on sphingomyelin (SM). It may also act on ceramide phosphoethanolamine (CPE), lysophosphatidylcholine (LPC) and lysophosphatidylethanolamine (LPE), but not on lysophosphatidylserine (LPS), and lysophosphatidylglycerol (LPG). It acts by transphosphatidylation, releasing exclusively cyclic phosphate products as second products. Induces dermonecrosis, hemolysis, increased vascular permeability, edema, inflammatory response, and platelet aggregation. The polypeptide is Dermonecrotic toxin LhSicTox-alphaIA2avii (Loxosceles hirsuta (Recluse spider)).